The sequence spans 203 residues: Recombination protein RecR (203 aa).

The C4-type zinc-finger motif lies at 56–71 (CAVCGNVSDDERCRIC). Residues 79-179 (SVVCVVEEPK…TVTRIASGLP (101 aa)) enclose the Toprim domain.

It belongs to the RecR family.

In terms of biological role, may play a role in DNA repair. It seems to be involved in an RecBC-independent recombinational process of DNA repair. It may act with RecF and RecO. The polypeptide is Recombination protein RecR (Mycobacterium avium (strain 104)).